Here is a 271-residue protein sequence, read N- to C-terminus: Probable endonuclease lcl3 (271 aa).

Positions Met-1–Asp-27 are disordered. Over residues Ser-15–Asp-27 the composition is skewed to polar residues. Residues Leu-38–Tyr-55 traverse the membrane as a helical segment. Residues Lys-76–Lys-236 enclose the TNase-like domain. The active site involves Arg-127. Asp-132 lines the Ca(2+) pocket. Active-site residues include Glu-135 and Arg-175. Positions Ala-226 to Gly-271 are disordered. Basic and acidic residues predominate over residues Ser-253 to Gly-271.

This sequence belongs to the LCL3 family.

The protein resides in the mitochondrion. The protein localises to the membrane. The polypeptide is Probable endonuclease lcl3 (lcl3) (Pyrenophora tritici-repentis (strain Pt-1C-BFP) (Wheat tan spot fungus)).